Reading from the N-terminus, the 793-residue chain is Probable exo-1,4-beta-xylosidase xlnD (793 aa).

The first 20 residues, 1 to 20, serve as a signal peptide directing secretion; sequence MPRVASVAAVLAALLPSALG. Asn23, Asn87, and Asn142 each carry an N-linked (GlcNAc...) asparagine glycan. Asp310 is a catalytic residue. N-linked (GlcNAc...) asparagine glycans are attached at residues Asn326, Asn385, Asn404, Asn440, Asn477, Asn518, Asn559, Asn614, Asn652, Asn679, and Asn701.

Belongs to the glycosyl hydrolase 3 family.

Its subcellular location is the secreted. The catalysed reaction is Hydrolysis of (1-&gt;4)-beta-D-xylans, to remove successive D-xylose residues from the non-reducing termini.. It functions in the pathway glycan degradation; xylan degradation. Functionally, xylan 1,4-beta-xylosidase involved in the hydrolysis of xylan, a major structural heterogeneous polysaccharide found in plant biomass representing the second most abundant polysaccharide in the biosphere, after cellulose. This Aspergillus terreus (strain NIH 2624 / FGSC A1156) protein is Probable exo-1,4-beta-xylosidase xlnD (xlnD).